The chain runs to 270 residues: MQYWGKIIGVAVALMMGGGFWGVVLGLLVGHMFDKARSRKMAWFANQRERQALFFATTFEVMGHLTKSKGRVTEADIHIASQLMDRMNLHGDSRTAAQNAFRVGKADNYPLREKMRQFRSVCFGRFDLIRMFLEIQIQAAFADGSLHPNEREVLYVIAEELGISRVQFDQFLRMMQGGAQFGGGYHQQSGGGWQQAQRGPTLEDACNVLGVKTTDDATTIKRAYRKLMSEHHPDKLVAKGLPPEMMEMAKQKAQEIQKAYELIKEQKGFK.

Topologically, residues 1 to 6 are periplasmic; sequence MQYWGK. A helical membrane pass occupies residues 7–31; it reads IIGVAVALMMGGGFWGVVLGLLVGH. Over 32 to 270 the chain is Cytoplasmic; it reads MFDKARSRKM…ELIKEQKGFK (239 aa). The J domain occupies 204-270; that stretch reads DACNVLGVKT…ELIKEQKGFK (67 aa).

Homodimer.

It localises to the cell inner membrane. Regulatory DnaK co-chaperone. Direct interaction between DnaK and DjlA is needed for the induction of the wcaABCDE operon, involved in the synthesis of a colanic acid polysaccharide capsule, possibly through activation of the RcsB/RcsC phosphotransfer signaling pathway. The colanic acid capsule may help the bacterium survive conditions outside the host. The polypeptide is Co-chaperone protein DjlA (Salmonella paratyphi A (strain ATCC 9150 / SARB42)).